Consider the following 184-residue polypeptide: ATP synthase subunit delta (184 aa).

This sequence belongs to the ATPase delta chain family. As to quaternary structure, F-type ATPases have 2 components, F(1) - the catalytic core - and F(0) - the membrane proton channel. F(1) has five subunits: alpha(3), beta(3), gamma(1), delta(1), epsilon(1). CF(0) has four main subunits: a(1), b(1), b'(1) and c(10-14). The alpha and beta chains form an alternating ring which encloses part of the gamma chain. F(1) is attached to F(0) by a central stalk formed by the gamma and epsilon chains, while a peripheral stalk is formed by the delta, b and b' chains.

It localises to the cellular thylakoid membrane. Its function is as follows. F(1)F(0) ATP synthase produces ATP from ADP in the presence of a proton or sodium gradient. F-type ATPases consist of two structural domains, F(1) containing the extramembraneous catalytic core and F(0) containing the membrane proton channel, linked together by a central stalk and a peripheral stalk. During catalysis, ATP synthesis in the catalytic domain of F(1) is coupled via a rotary mechanism of the central stalk subunits to proton translocation. This protein is part of the stalk that links CF(0) to CF(1). It either transmits conformational changes from CF(0) to CF(1) or is implicated in proton conduction. The polypeptide is ATP synthase subunit delta (Nostoc punctiforme (strain ATCC 29133 / PCC 73102)).